Reading from the N-terminus, the 130-residue chain is DNA-binding protein HU (130 aa).

This sequence belongs to the bacterial histone-like protein family.

In terms of biological role, histone-like DNA-binding protein which is capable of wrapping DNA to stabilize it, and thus to prevent its denaturation under extreme environmental conditions. This chain is DNA-binding protein HU (hup), found in Ureaplasma parvum serovar 3 (strain ATCC 700970).